A 448-amino-acid chain; its full sequence is D-inositol 3-phosphate glycosyltransferase (448 aa).

Residues histidine 35, 46 to 51, lysine 104, tyrosine 137, threonine 161, and arginine 181 contribute to the 1D-myo-inositol 3-phosphate site; that span reads DAGGLN. Glycine 49 is a UDP-N-acetyl-alpha-D-glucosamine binding site. Residues arginine 255, lysine 260, and methionine 321 each contribute to the UDP-N-acetyl-alpha-D-glucosamine site. Residues tyrosine 330, arginine 331, and alanine 333 each coordinate Mg(2+). Residues glutamate 343 and glutamate 351 each coordinate UDP-N-acetyl-alpha-D-glucosamine. Position 357 (threonine 357) interacts with Mg(2+).

It belongs to the glycosyltransferase group 1 family. MshA subfamily. In terms of assembly, homodimer.

It carries out the reaction 1D-myo-inositol 3-phosphate + UDP-N-acetyl-alpha-D-glucosamine = 1D-myo-inositol 2-acetamido-2-deoxy-alpha-D-glucopyranoside 3-phosphate + UDP + H(+). Catalyzes the transfer of a N-acetyl-glucosamine moiety to 1D-myo-inositol 3-phosphate to produce 1D-myo-inositol 2-acetamido-2-deoxy-glucopyranoside 3-phosphate in the mycothiol biosynthesis pathway. In Acidothermus cellulolyticus (strain ATCC 43068 / DSM 8971 / 11B), this protein is D-inositol 3-phosphate glycosyltransferase.